A 373-amino-acid polypeptide reads, in one-letter code: Chaperone protein DnaJ (373 aa).

Residues 4 to 68 (DFYEILGVSR…QARANYDRFG (65 aa)) form the J domain. The CR-type zinc-finger motif lies at 132–214 (GGEKEIRINH…CGGQGHIQVS (83 aa)). Positions 145, 148, 162, 165, 188, 191, 202, and 205 each coordinate Zn(2+). CXXCXGXG motif repeat units follow at residues 145–152 (CKTCQGTG), 162–169 (CSTCGGVG), 188–195 (CPTCGGSG), and 202–209 (CESCGGQG).

The protein belongs to the DnaJ family. Homodimer. Requires Zn(2+) as cofactor.

The protein resides in the cytoplasm. Participates actively in the response to hyperosmotic and heat shock by preventing the aggregation of stress-denatured proteins and by disaggregating proteins, also in an autonomous, DnaK-independent fashion. Unfolded proteins bind initially to DnaJ; upon interaction with the DnaJ-bound protein, DnaK hydrolyzes its bound ATP, resulting in the formation of a stable complex. GrpE releases ADP from DnaK; ATP binding to DnaK triggers the release of the substrate protein, thus completing the reaction cycle. Several rounds of ATP-dependent interactions between DnaJ, DnaK and GrpE are required for fully efficient folding. Also involved, together with DnaK and GrpE, in the DNA replication of plasmids through activation of initiation proteins. In Thermosynechococcus vestitus (strain NIES-2133 / IAM M-273 / BP-1), this protein is Chaperone protein DnaJ.